Consider the following 24-residue polypeptide: Humanin-like 9 (24 aa).

This sequence belongs to the humanin family. Highly expressed in the kidney, heart muscle and testis.

It is found in the secreted. It localises to the cytoplasm. Its function is as follows. Plays a role as a neuroprotective and antiapoptotic factor. The sequence is that of Humanin-like 9 from Homo sapiens (Human).